A 53-amino-acid chain; its full sequence is KELLDADGDILRNGGPAYPGLMPGVERDLPASGWGLPRRTGDESCPLNVKAVR.

Residues 33 to 53 (GWGLPRRTGDESCPLNVKAVR) are disordered.

Belongs to the protease inhibitor I3 (leguminous Kunitz-type inhibitor) family. In terms of assembly, heterodimer of an alpha and a beta chain linked by a disulfide bond.

Functionally, inhibits trypsin with a Ki of 0.25 uM. Inhibits the trypsin-like proteases in midguts of larval H.armigera, S.exigua, and P.rapae. The sequence is that of Kunitz-type trypsin inhibitor alpha chain from Albizia kalkora (Kalkora mimosa).